The sequence spans 804 residues: Probable cadmium-transporting ATPase (804 aa).

2 consecutive HMA domains span residues 11–74 and 89–152; these read DKQV…LKVA and DKNV…LKVI. 4 residues coordinate Cd(2+): Cys-22, Cys-25, Cys-100, and Cys-103. Transmembrane regions (helical) follow at residues 183–203, 207–227, 248–268, 413–433, and 441–461; these read STLLFATLLIAFGYLSHFVNG, LVTSMLFVSSIVIGGYSLFKV, IGAAIIGEWAEASIVVILFAI, IIMVIAALVAVVPPLFFGGSW, and LAVLVVGCPCALVITTPISIV. Residue Asp-492 is the 4-aspartylphosphate intermediate of the active site. Transmembrane regions (helical) follow at residues 749 to 771 and 776 to 798; these read LNIIKANITFAIGIKIIALLLVI and TLWIAILSDMGATILVALNSLRL.

It belongs to the cation transport ATPase (P-type) (TC 3.A.3) family. Type IB subfamily.

It localises to the cell membrane. It catalyses the reaction Cd(2+)(in) + ATP + H2O = Cd(2+)(out) + ADP + phosphate + H(+). Its function is as follows. Couples the hydrolysis of ATP with the export of cadmium. Involved in cadmium resistance. The sequence is that of Probable cadmium-transporting ATPase (cadA) from Staphylococcus aureus.